Reading from the N-terminus, the 236-residue chain is MKKPLLLTLLCMILAGCDNPKSLESFTPEMASFSNEFDFDPLRGPVKDFSQTLMSENGEVAKQVTGTLSQEGCFDTLELHDLENNTGLALVLDANYYRDAQTLEKKVQLQGKCQLAALPSAGVTWETDDNGFVVSATGKEMKVEYRYDSEGYPLGKTTINSQNTLSVTAKPSADPRKKLDYTAVSRVDDRQVGNVTQSCEYDAYANPVDCRLVIVDESVKPAVSHHYTIKNRIDYY.

The first 16 residues, 1–16, serve as a signal peptide directing secretion; sequence MKKPLLLTLLCMILAG. Residue Cys-17 is the site of N-palmitoyl cysteine attachment. Cys-17 carries S-diacylglycerol cysteine lipidation.

This sequence belongs to the UPF0257 family.

The protein resides in the cell membrane. This is UPF0257 lipoprotein YnfC from Salmonella schwarzengrund (strain CVM19633).